The chain runs to 197 residues: NADH-quinone oxidoreductase subunit C (197 aa).

It belongs to the complex I 30 kDa subunit family. In terms of assembly, NDH-1 is composed of 14 different subunits. Subunits NuoB, C, D, E, F, and G constitute the peripheral sector of the complex.

Its subcellular location is the cell inner membrane. It catalyses the reaction a quinone + NADH + 5 H(+)(in) = a quinol + NAD(+) + 4 H(+)(out). Functionally, NDH-1 shuttles electrons from NADH, via FMN and iron-sulfur (Fe-S) centers, to quinones in the respiratory chain. The immediate electron acceptor for the enzyme in this species is believed to be ubiquinone. Couples the redox reaction to proton translocation (for every two electrons transferred, four hydrogen ions are translocated across the cytoplasmic membrane), and thus conserves the redox energy in a proton gradient. This chain is NADH-quinone oxidoreductase subunit C, found in Caulobacter vibrioides (strain ATCC 19089 / CIP 103742 / CB 15) (Caulobacter crescentus).